Here is a 91-residue protein sequence, read N- to C-terminus: Small ribosomal subunit protein bS16 (91 aa).

Belongs to the bacterial ribosomal protein bS16 family.

This Phytoplasma australiense protein is Small ribosomal subunit protein bS16.